The following is a 243-amino-acid chain: Small ribosomal subunit protein uS3 (243 aa).

N-acetylalanine is present on Ala2. Ser6 and Ser35 each carry phosphoserine. The KH type-2 domain occupies 21–92; it reads LNEFLTRELA…SVELYAEKVA (72 aa). At Thr42 the chain carries Phosphothreonine. The residue at position 62 (Lys62) is an N6-acetyllysine. An asymmetric dimethylarginine mark is found at Arg64, Arg65, and Arg67. Thr70 is subject to Phosphothreonine. Residue Lys90 forms a Glycyl lysine isopeptide (Lys-Gly) (interchain with G-Cter in ubiquitin) linkage. Ser104 carries the post-translational modification Phosphoserine. The residue at position 132 (Lys132) is an N6-succinyllysine. The disordered stretch occupies residues 200 to 243; it reads PKKPLPDHVSIVEPKDEILPTTPISEQKGGKPEPPAMPQPVPTA. Residue Lys202 forms a Glycyl lysine isopeptide (Lys-Gly) (interchain with G-Cter in ubiquitin) linkage. Ser209 bears the Phosphoserine mark. A Glycyl lysine isopeptide (Lys-Gly) (interchain with G-Cter in SUMO2); alternate cross-link involves residue Lys214. Lys214 participates in a covalent cross-link: Glycyl lysine isopeptide (Lys-Gly) (interchain with G-Cter in ubiquitin); alternate. Phosphothreonine occurs at positions 220 and 221. Residue Ser224 is modified to Phosphoserine. Residue Lys230 forms a Glycyl lysine isopeptide (Lys-Gly) (interchain with G-Cter in SUMO2) linkage. Residues 231–243 are compositionally biased toward pro residues; sequence PEPPAMPQPVPTA. Thr242 is modified (phosphothreonine).

The protein belongs to the universal ribosomal protein uS3 family. As to quaternary structure, component of the 40S small ribosomal subunit. Identified in a IGF2BP1-dependent mRNP granule complex containing untranslated mRNAs. Interacts with HNRPD. Interacts with PRMT1; the interaction methylates RPS3. Interacts with SUMO1; the interaction sumoylates RPS3. Interacts with UBC9. Interacts with CDK1; the interaction phosphorylates RPS3. Interacts with PRKCD; the interaction phosphorylates RPS3. Interacts with PKB/AKT; the interaction phosphorylates RPS3. Interacts with E2F1; the interaction occurs in the absence of nerve growth factor and increases transcription of pro-apoptotic proteins BCL2L11/BIM and HRK/Dp5. Interacts with the base excision repair proteins APEX1 and OGG1; interaction with OGG1 increases OGG1 N-glycosylase activity. Interacts with UNG; the interaction increases the uracil excision activity of UNG1. Interacts with HSP90; the interaction prevents the ubiquitination and proteasome-dependent degradation of RPS3 and is suppressed by increased ROS levels. Interacts with TOM70; the interaction promotes translocation of RPS3 to the mitochondrion. Interacts (via N-terminus) with RELA (via N-terminus); the interaction enhances the DNA-binding activity of the NF-kappa-B p65-p50 complex. Interacts with NFKBIA; the interaction is direct and may bridge the interaction between RPS3 and RELA. Interacts with IKKB; the interaction phosphorylates RPS3 and enhances its translocation to the nucleus. Interacts (via KH domain) with MDM2 and TP53. Interacts with TRADD. Interacts with ASCC3. Identified in a HCV IRES-mediated translation complex, at least composed of EIF3C, IGF2BP1, RPS3 and HCV RNA-replicon. Interacts with CRY1. In terms of processing, methylation by PRMT1 is required for import into the nucleolus and for ribosome assembly. Post-translationally, sumoylation by SUMO1 enhances protein stability through increased resistance to proteolysis. Sumoylation occurs at one or more of the three consensus sites, Lys-18, Lys-214 and Lys-230. Phosphorylation at Thr-221 by CDK1 occurs mainly in G2/M phase. Phosphorylation by PRKCD occurs on a non-ribosomal-associated form which results in translocation of RPS3 to the nucleus and enhances its endonuclease activity. Phosphorylated on Ser-209 by IKKB in response to activation of the NF-kappa-B p65-p50 complex which enhances the association of RPS3 with importin-alpha and mediates the nuclear translocation of RPS3. Phosphorylation by MAPK is required for translocation to the nucleus following exposure of cells to DNA damaging agents such as hydrogen peroxide. Phosphorylation by PKB/AKT mediates RPS3 nuclear translocation, enhances RPS3 endonuclease activity and suppresses RPS3-induced neuronal apoptosis. In terms of processing, ubiquitinated; ubiquitination is prevented by interaction with HSP90 which stabilizes the protein. Monoubiquitinated at Lys-214 by RNF10 and ZNF598 when a ribosome has stalled during translation of poly(A) sequences, leading to preclude synthesis of a long poly-lysine tail and initiate the ribosome quality control (RQC) pathway to degrade the potentially detrimental aberrant nascent polypeptide. Deubiquitinated at Lys-214 by USP10, preventing degradation by the proteasome and promoting 40S ribosome subunit recycling following ribosome dissociation. Post-translationally, ufmylated by UFL1.

Its subcellular location is the cytoplasm. The protein localises to the nucleus. It is found in the nucleolus. It localises to the mitochondrion inner membrane. The protein resides in the cytoskeleton. Its subcellular location is the spindle. It catalyses the reaction 2'-deoxyribonucleotide-(2'-deoxyribose 5'-phosphate)-2'-deoxyribonucleotide-DNA = a 3'-end 2'-deoxyribonucleotide-(2,3-dehydro-2,3-deoxyribose 5'-phosphate)-DNA + a 5'-end 5'-phospho-2'-deoxyribonucleoside-DNA + H(+). Endonuclease activity is inhibited by MgCl2 on apurinic/apyrimidinic DNA but not on UV-irradiated DNA. Functionally, component of the small ribosomal subunit. The ribosome is a large ribonucleoprotein complex responsible for the synthesis of proteins in the cell. Has endonuclease activity and plays a role in repair of damaged DNA. Cleaves phosphodiester bonds of DNAs containing altered bases with broad specificity and cleaves supercoiled DNA more efficiently than relaxed DNA. Displays high binding affinity for 7,8-dihydro-8-oxoguanine (8-oxoG), a common DNA lesion caused by reactive oxygen species (ROS). Has also been shown to bind with similar affinity to intact and damaged DNA. Stimulates the N-glycosylase activity of the base excision protein OGG1. Enhances the uracil excision activity of UNG1. Also stimulates the cleavage of the phosphodiester backbone by APEX1. When located in the mitochondrion, reduces cellular ROS levels and mitochondrial DNA damage. Has also been shown to negatively regulate DNA repair in cells exposed to hydrogen peroxide. Plays a role in regulating transcription as part of the NF-kappa-B p65-p50 complex where it binds to the RELA/p65 subunit, enhances binding of the complex to DNA and promotes transcription of target genes. Represses its own translation by binding to its cognate mRNA. Binds to and protects TP53/p53 from MDM2-mediated ubiquitination. Involved in spindle formation and chromosome movement during mitosis by regulating microtubule polymerization. Involved in induction of apoptosis through its role in activation of CASP8. Induces neuronal apoptosis by interacting with the E2F1 transcription factor and acting synergistically with it to up-regulate pro-apoptotic proteins BCL2L11/BIM and HRK/Dp5. Interacts with TRADD following exposure to UV radiation and induces apoptosis by caspase-dependent JNK activation. In Oryctolagus cuniculus (Rabbit), this protein is Small ribosomal subunit protein uS3 (RPS3).